The following is a 441-amino-acid chain: Ribosomal protein uS12 methylthiotransferase RimO (441 aa).

The 111-residue stretch at 8 to 118 (PKIGFVSLGC…VLQHVHHYVP (111 aa)) folds into the MTTase N-terminal domain. Residues cysteine 17, cysteine 53, cysteine 82, cysteine 150, cysteine 154, and cysteine 157 each contribute to the [4Fe-4S] cluster site. One can recognise a Radical SAM core domain in the interval 136 to 373 (LTPRHYAYLK…MQLQQQISAE (238 aa)). A TRAM domain is found at 376 to 441 (QEKVGREILV…DEYDLWGSRV (66 aa)).

The protein belongs to the methylthiotransferase family. RimO subfamily. Requires [4Fe-4S] cluster as cofactor.

It localises to the cytoplasm. It catalyses the reaction L-aspartate(89)-[ribosomal protein uS12]-hydrogen + (sulfur carrier)-SH + AH2 + 2 S-adenosyl-L-methionine = 3-methylsulfanyl-L-aspartate(89)-[ribosomal protein uS12]-hydrogen + (sulfur carrier)-H + 5'-deoxyadenosine + L-methionine + A + S-adenosyl-L-homocysteine + 2 H(+). Its function is as follows. Catalyzes the methylthiolation of an aspartic acid residue of ribosomal protein uS12. The protein is Ribosomal protein uS12 methylthiotransferase RimO of Salmonella typhi.